The chain runs to 238 residues: Trypsin-3 (238 aa).

A signal peptide spans 1 to 7 (FAVAFAA). Positions 8–15 (PIDDEDDK) are cleaved as a propeptide — activation peptide. In terms of domain architecture, Peptidase S1 spans 16–236 (IVGGYECRKN…YRSWISSTMS (221 aa)). Intrachain disulfides connect Cys-22/Cys-152, Cys-40/Cys-56, Cys-124/Cys-225, Cys-131/Cys-198, Cys-163/Cys-177, and Cys-188/Cys-212. The active-site Charge relay system is the His-55. Ca(2+) contacts are provided by Glu-67, Asn-69, Val-72, and Glu-77. Asp-99 functions as the Charge relay system in the catalytic mechanism. Residue Ser-192 is the Charge relay system of the active site.

It belongs to the peptidase S1 family. Ca(2+) serves as cofactor.

The protein localises to the secreted. Its subcellular location is the extracellular space. It catalyses the reaction Preferential cleavage: Arg-|-Xaa, Lys-|-Xaa.. The protein is Trypsin-3 of Salmo salar (Atlantic salmon).